The primary structure comprises 90 residues: Acyl-CoA-binding protein homolog (90 aa).

Residues 3–89 (LQEQFDQAAS…VESLIASLGL (87 aa)) enclose the ACB domain. An acyl-CoA is bound by residues Arg15, 30-34 (YALFK), Lys53, Lys57, and Tyr76.

It belongs to the ACBP family.

Its function is as follows. Binds medium- and long-chain acyl-CoA esters with very high affinity and may function as an intracellular carrier of acyl-CoA esters. The sequence is that of Acyl-CoA-binding protein homolog from Manduca sexta (Tobacco hawkmoth).